The sequence spans 358 residues: Leukotriene B4 receptor 2 (358 aa).

Residues 1–24 (MSVCYRPPGNETLLSWKTSRATGT) lie on the Extracellular side of the membrane. A glycan (N-linked (GlcNAc...) asparagine) is linked at N10. A helical transmembrane segment spans residues 25-45 (AFLLLAALLGLPGNGFVVWSL). Residues 46-60 (AGWRPARGRPLAATL) are Cytoplasmic-facing. Residues 61–81 (VLHLALADGAVLLLTPLFVAF) traverse the membrane as a helical segment. Over 82-96 (LTRQAWPLGQAGCKA) the chain is Extracellular. Residues 97-117 (VYYVCALSMYASVLLTGLLSL) traverse the membrane as a helical segment. Over 118-140 (QRCLAVTRPFLAPRLRSPALARR) the chain is Cytoplasmic. A helical transmembrane segment spans residues 141 to 161 (LLLAVWLAALLLAVPAAVYRH). Residues 162–185 (LWRDRVCQLCHPSPVHAAAHLSLE) lie on the Extracellular side of the membrane. A helical membrane pass occupies residues 186 to 206 (TLTAFVLPFGLMLGCYSVTLA). The Cytoplasmic portion of the chain corresponds to 207-224 (RLRGARWGSGRHGARVGR). Residues 225 to 245 (LVSAIVLAFGLLWAPYHAVNL) form a helical membrane-spanning segment. Topologically, residues 246–275 (LQAVAALAPPEGALAKLGGAGQAARAGTTA) are extracellular. A helical membrane pass occupies residues 276–296 (LAFFSSSVNPVLYVFTAGDLL). The Cytoplasmic portion of the chain corresponds to 297–358 (PRAGPRFLTR…MEKDGPEWDL (62 aa)). A disordered region spans residues 311–358 (SGEARGGGRSREGTMELRTTPQLKVVGQGRGNGDPGGGMEKDGPEWDL). Over residues 338–348 (QGRGNGDPGGG) the composition is skewed to gly residues. Positions 349 to 358 (MEKDGPEWDL) are enriched in basic and acidic residues.

It belongs to the G-protein coupled receptor 1 family. In terms of tissue distribution, widely expressed.

The protein resides in the cell membrane. Functionally, low-affinity receptor for leukotrienes including leukotriene B4. Mediates chemotaxis of granulocytes and macrophages. The response is mediated via G-proteins that activate a phosphatidylinositol-calcium second messenger system. The rank order of affinities for the leukotrienes is LTB4 &gt; 12-epi-LTB4 &gt; LTB5 &gt; LTB3. The sequence is that of Leukotriene B4 receptor 2 (LTB4R2) from Homo sapiens (Human).